Here is a 476-residue protein sequence, read N- to C-terminus: Ribulose bisphosphate carboxylase large chain (476 aa).

Substrate contacts are provided by Asn124 and Thr174. The active-site Proton acceptor is Lys176. Residue Lys178 participates in substrate binding. Residues Lys202, Asp204, and Glu205 each coordinate Mg(2+). Lys202 is modified (N6-carboxylysine). His295 functions as the Proton acceptor in the catalytic mechanism. 3 residues coordinate substrate: Arg296, His328, and Ser380.

It belongs to the RuBisCO large chain family. Type I subfamily. As to quaternary structure, heterohexadecamer of 8 large chains and 8 small chains; disulfide-linked. The disulfide link is formed within the large subunit homodimers. Requires Mg(2+) as cofactor. Post-translationally, the disulfide bond which can form in the large chain dimeric partners within the hexadecamer appears to be associated with oxidative stress and protein turnover.

It localises to the carboxysome. The enzyme catalyses 2 (2R)-3-phosphoglycerate + 2 H(+) = D-ribulose 1,5-bisphosphate + CO2 + H2O. It catalyses the reaction D-ribulose 1,5-bisphosphate + O2 = 2-phosphoglycolate + (2R)-3-phosphoglycerate + 2 H(+). Its function is as follows. RuBisCO catalyzes two reactions: the carboxylation of D-ribulose 1,5-bisphosphate, the primary event in carbon dioxide fixation, as well as the oxidative fragmentation of the pentose substrate in the photorespiration process. Both reactions occur simultaneously and in competition at the same active site. This Acaryochloris marina (strain MBIC 11017) protein is Ribulose bisphosphate carboxylase large chain.